Here is a 100-residue protein sequence, read N- to C-terminus: NAD(P)H-quinone oxidoreductase subunit 4L, chloroplastic (100 aa).

Transmembrane regions (helical) follow at residues 1-21, 27-47, and 61-81; these read MIENILIIGAFLFCIGTYGLI, IKVLMCLELMFNSVNINLVAF, and FAVFIIAIAAAEAAIGLAIVF.

Belongs to the complex I subunit 4L family. NDH is composed of at least 16 different subunits, 5 of which are encoded in the nucleus.

The protein localises to the plastid. Its subcellular location is the chloroplast thylakoid membrane. The catalysed reaction is a plastoquinone + NADH + (n+1) H(+)(in) = a plastoquinol + NAD(+) + n H(+)(out). It carries out the reaction a plastoquinone + NADPH + (n+1) H(+)(in) = a plastoquinol + NADP(+) + n H(+)(out). Functionally, NDH shuttles electrons from NAD(P)H:plastoquinone, via FMN and iron-sulfur (Fe-S) centers, to quinones in the photosynthetic chain and possibly in a chloroplast respiratory chain. The immediate electron acceptor for the enzyme in this species is believed to be plastoquinone. Couples the redox reaction to proton translocation, and thus conserves the redox energy in a proton gradient. The sequence is that of NAD(P)H-quinone oxidoreductase subunit 4L, chloroplastic from Chaetosphaeridium globosum (Charophycean green alga).